We begin with the raw amino-acid sequence, 393 residues long: MKRPLRRPFAVLLFVVLCAAASFPSVLRRSVGPAPVLAPLPPLDPARLNATLLRLAAADPSEAPLRRDVDDLLEGRLPASSARARAWRLRGDRLHLHLRHHQFPVYRRGHHPDHDHDPLLHPLPRQELLLDPSLRRALRSWHRLRRHDPGVLRNLPSLLSLPGRIPSCAVVGNSGILLGASHGALIDSHAAVFRLNNARISGFAANVGAKTNLSFINSNVLHLCARRPNCFCHPYGDGVPILLYICQAAHFLDVASCNASSRSLHAASISVTDPRLDVLCARIVKYYSLRRFVAETGRAAEEWSSTRDAAMFHYSSGMQAIMVAVGVCDRVSVFGFGKAADAKHHYHSNQKAELDLHDYKAEYAFYRDLADRPEVVPFLNDAGIAVPPVVFYH.

Residues 1-8 (MKRPLRRP) lie on the Cytoplasmic side of the membrane. A helical; Signal-anchor for type II membrane protein transmembrane segment spans residues 9–27 (FAVLLFVVLCAAASFPSVL). Residues 28-393 (RRSVGPAPVL…IAVPPVVFYH (366 aa)) are Lumenal-facing. N-linked (GlcNAc...) asparagine glycans are attached at residues asparagine 49, asparagine 212, and asparagine 258.

This sequence belongs to the glycosyltransferase 29 family.

It localises to the golgi apparatus membrane. In terms of biological role, possesses sialyltransferase-like activity in vitro. Transfers sialic acid to the oligosaccharide Gal-beta-1,3-GalNAc and to glycoproteins such as asialofetuin, alpha-1-acid glycoprotein (NeuAc-alpha-2,3-Gal-beta-1,3-GalNAc-) and andasialo-alpha-1-acid glycoprotein. The transferred sialic acid is linked to galactose of Gal-beta-1,3-GalNAc through alpha-2,6-linkage. In Oryza sativa subsp. indica (Rice), this protein is Sialyltransferase-like protein 1.